A 755-amino-acid polypeptide reads, in one-letter code: Subtilisin-like protease 4 (755 aa).

A signal peptide spans 1–20; sequence MDYFLFIALTFLLTFHVHNA. Residues 41–119 enclose the Inhibitor I9 domain; the sequence is YIIHVTGPEG…ISAHPQRVLH (79 aa). One can recognise a Peptidase S8 domain in the interval 128-611; sequence FLGLQQDTGV…SGHVNPSRAN (484 aa). Catalysis depends on Asp153, which acts as the Charge relay system. N-linked (GlcNAc...) asparagine glycosylation occurs at Asn182. His217 acts as the Charge relay system in catalysis. N-linked (GlcNAc...) asparagine glycans are attached at residues Asn297, Asn325, Asn393, Asn468, and Asn529. Positions 376-461 constitute a PA domain; it reads PLAYAGKNGK…ATHVSYAAGI (86 aa). Residue Ser544 is the Charge relay system of the active site. Asn706 and Asn727 each carry an N-linked (GlcNAc...) asparagine glycan.

It belongs to the peptidase S8 family.

It localises to the secreted. Its subcellular location is the extracellular space. The protein resides in the apoplast. Its function is as follows. Required for arbuscular mycorrhiza (AM) development during AM symbiosis with AM fungi (e.g. Glomeromycota intraradices). The chain is Subtilisin-like protease 4 from Lotus japonicus (Lotus corniculatus var. japonicus).